The chain runs to 95 residues: Large ribosomal subunit protein bL25 (95 aa).

It belongs to the bacterial ribosomal protein bL25 family. As to quaternary structure, part of the 50S ribosomal subunit; part of the 5S rRNA/L5/L18/L25 subcomplex. Contacts the 5S rRNA. Binds to the 5S rRNA independently of L5 and L18.

Its function is as follows. This is one of the proteins that binds to the 5S RNA in the ribosome where it forms part of the central protuberance. The protein is Large ribosomal subunit protein bL25 of Actinobacillus succinogenes (strain ATCC 55618 / DSM 22257 / CCUG 43843 / 130Z).